Reading from the N-terminus, the 460-residue chain is V-type ATP synthase beta chain (460 aa).

Belongs to the ATPase alpha/beta chains family.

Produces ATP from ADP in the presence of a proton gradient across the membrane. The V-type beta chain is a regulatory subunit. The chain is V-type ATP synthase beta chain from Acetivibrio thermocellus (strain ATCC 27405 / DSM 1237 / JCM 9322 / NBRC 103400 / NCIMB 10682 / NRRL B-4536 / VPI 7372) (Clostridium thermocellum).